Reading from the N-terminus, the 484-residue chain is Protein nucleotidyltransferase YdiU (484 aa).

ATP-binding residues include Gly-81, Gly-83, Arg-84, Lys-103, Asp-115, Gly-116, Arg-166, and Arg-173. The active-site Proton acceptor is the Asp-244. Mg(2+) contacts are provided by Asn-245 and Asp-254. Residue Asp-254 coordinates ATP.

It belongs to the SELO family. It depends on Mg(2+) as a cofactor. Mn(2+) is required as a cofactor.

The enzyme catalyses L-seryl-[protein] + ATP = 3-O-(5'-adenylyl)-L-seryl-[protein] + diphosphate. It catalyses the reaction L-threonyl-[protein] + ATP = 3-O-(5'-adenylyl)-L-threonyl-[protein] + diphosphate. The catalysed reaction is L-tyrosyl-[protein] + ATP = O-(5'-adenylyl)-L-tyrosyl-[protein] + diphosphate. It carries out the reaction L-histidyl-[protein] + UTP = N(tele)-(5'-uridylyl)-L-histidyl-[protein] + diphosphate. The enzyme catalyses L-seryl-[protein] + UTP = O-(5'-uridylyl)-L-seryl-[protein] + diphosphate. It catalyses the reaction L-tyrosyl-[protein] + UTP = O-(5'-uridylyl)-L-tyrosyl-[protein] + diphosphate. Its function is as follows. Nucleotidyltransferase involved in the post-translational modification of proteins. It can catalyze the addition of adenosine monophosphate (AMP) or uridine monophosphate (UMP) to a protein, resulting in modifications known as AMPylation and UMPylation. This is Protein nucleotidyltransferase YdiU from Shewanella baltica (strain OS185).